The chain runs to 1071 residues: DNA-directed RNA polymerase subunit beta (1071 aa).

The protein belongs to the RNA polymerase beta chain family. In plastids the minimal PEP RNA polymerase catalytic core is composed of four subunits: alpha, beta, beta', and beta''. When a (nuclear-encoded) sigma factor is associated with the core the holoenzyme is formed, which can initiate transcription.

The protein resides in the plastid. It is found in the chloroplast. The catalysed reaction is RNA(n) + a ribonucleoside 5'-triphosphate = RNA(n+1) + diphosphate. Its function is as follows. DNA-dependent RNA polymerase catalyzes the transcription of DNA into RNA using the four ribonucleoside triphosphates as substrates. The polypeptide is DNA-directed RNA polymerase subunit beta (Anthoceros angustus (Hornwort)).